Here is a 277-residue protein sequence, read N- to C-terminus: Large ribosomal subunit protein uL2 (277 aa).

The interval 223–261 is disordered; it reads SVMNPNDHPHGGGEGKSPVGRPSPVTPWGKPALGYKTRK.

This sequence belongs to the universal ribosomal protein uL2 family. Part of the 50S ribosomal subunit. Forms a bridge to the 30S subunit in the 70S ribosome.

Its function is as follows. One of the primary rRNA binding proteins. Required for association of the 30S and 50S subunits to form the 70S ribosome, for tRNA binding and peptide bond formation. It has been suggested to have peptidyltransferase activity; this is somewhat controversial. Makes several contacts with the 16S rRNA in the 70S ribosome. In Clostridium botulinum (strain Alaska E43 / Type E3), this protein is Large ribosomal subunit protein uL2.